Consider the following 356-residue polypeptide: MPIDPKLNVVPFISVDHMMKLVLKVGIDTFLTELAAEIEKDFRRWPIFDKKPRVGSHSQDGVIELMPTSDGSLYGFKYVNGHPKNTHQGRQTVTAFGVLSDVGNGYPLLLSEMTILTALRTAATSALAAKYLARPNSKTMAIIGNGAQSEFQARAFRAILGIQKLRLFDIDTSATRKCARNLTGPGFDIVECGSVAEAVEGADVITTVTADKQFATILSDNHVGPGVHINAVGGDCPGKTEISMEVLLRSDIFVEYPPQTWIEGDIQQLPRTHPVTELWQVMTGEKTGRVGDRQITMFDSVGFAIEDFSALRYVRAKITDFEMFTELDLLADPDEPRDLYGMLLRCEKKLEPTAVG.

L-ornithine is bound by residues arginine 53 and lysine 77. Residues threonine 92, arginine 120, 147–148 (AQ), aspartate 169, threonine 209, 232–235 (VGGD), lysine 239, and serine 300 each bind NAD(+). Arginine 120 contacts L-ornithine. L-ornithine is bound at residue aspartate 235. Aspartate 235 serves as the catalytic Proton donor/acceptor. Residue valine 301 coordinates L-ornithine.

The protein belongs to the ornithine cyclodeaminase/mu-crystallin family. Requires NAD(+) as cofactor.

The enzyme catalyses L-ornithine = L-proline + NH4(+). It participates in amino-acid biosynthesis; L-proline biosynthesis; L-proline from L-ornithine: step 1/1. Is inhibited by L-proline and L-lysine. Is not activated by small concentrations of L-arginine, and is even inhibited by about 50% at 0.5 mM L-arginine. Functionally, catalyzes the conversion of L-ornithine into L-proline with release of ammonia. Is involved in the utilization of octopine, a catabolic pathway that proceeds through L-arginine and L-ornithine to L-proline. Octopine is a predominant opine in plant cells transformed with Ti plasmid pTiAch5. This is Ornithine cyclodeaminase from Agrobacterium tumefaciens (strain Ach5).